We begin with the raw amino-acid sequence, 392 residues long: Phosphopentomutase (392 aa).

D15, D287, H292, D328, H329, and H340 together coordinate Mn(2+).

It belongs to the phosphopentomutase family. Requires Mn(2+) as cofactor.

It is found in the cytoplasm. The enzyme catalyses 2-deoxy-alpha-D-ribose 1-phosphate = 2-deoxy-D-ribose 5-phosphate. It carries out the reaction alpha-D-ribose 1-phosphate = D-ribose 5-phosphate. Its pathway is carbohydrate degradation; 2-deoxy-D-ribose 1-phosphate degradation; D-glyceraldehyde 3-phosphate and acetaldehyde from 2-deoxy-alpha-D-ribose 1-phosphate: step 1/2. In terms of biological role, isomerase that catalyzes the conversion of deoxy-ribose 1-phosphate (dRib-1-P) and ribose 1-phosphate (Rib-1-P) to deoxy-ribose 5-phosphate (dRib-5-P) and ribose 5-phosphate (Rib-5-P), respectively. The protein is Phosphopentomutase of Syntrophotalea carbinolica (strain DSM 2380 / NBRC 103641 / GraBd1) (Pelobacter carbinolicus).